A 342-amino-acid chain; its full sequence is Anthranilate phosphoribosyltransferase (342 aa).

5-phospho-alpha-D-ribose 1-diphosphate-binding positions include G79, 82–83 (GD), T87, 89–92 (NIST), 107–115 (KHCNQRISS), and S119. G79 is an anthranilate binding site. S91 provides a ligand contact to Mg(2+). N110 is a binding site for anthranilate. R165 is a binding site for anthranilate. D223 and E224 together coordinate Mg(2+).

It belongs to the anthranilate phosphoribosyltransferase family. In terms of assembly, homodimer. Requires Mg(2+) as cofactor.

The enzyme catalyses N-(5-phospho-beta-D-ribosyl)anthranilate + diphosphate = 5-phospho-alpha-D-ribose 1-diphosphate + anthranilate. The protein operates within amino-acid biosynthesis; L-tryptophan biosynthesis; L-tryptophan from chorismate: step 2/5. Functionally, catalyzes the transfer of the phosphoribosyl group of 5-phosphorylribose-1-pyrophosphate (PRPP) to anthranilate to yield N-(5'-phosphoribosyl)-anthranilate (PRA). This Buchnera aphidicola subsp. Acyrthosiphon pisum (strain 5A) protein is Anthranilate phosphoribosyltransferase.